Here is a 306-residue protein sequence, read N- to C-terminus: Esterase tropF (306 aa).

Active-site charge relay system residues include Ser147, Asp248, and His276.

This sequence belongs to the LovG family.

It participates in secondary metabolite biosynthesis. Its function is as follows. Esterase; part of the gene cluster that mediates the biosynthesis of the tropolone class of fungal maleic anhydrides. The pathway begins with the synthesis of 3-methylorcinaldehyde by the non-reducing polyketide synthase (PKS) tropA. 3-methylorcinaldehyde is the substrate for the FAD-dependent monooxygenase tropB to yield a dearomatized hydroxycyclohexadione. The 2-oxoglutarate-dependent dioxygenase tropC then performs the oxidative ring expansion to provide the first tropolone metabolite stipitaldehyde. Trop D converts stipitaldehyde into stipitacetal which is in turn converted to stipitalide by the short-chain dehydrogenase/reductase tropE. The next steps involve tropF, tropG, tropH, tropI and tropJ to form successive tropolone maleic anhydrides including stipitaldehydic, stipitatonic and stipitatic acids. The chain is Esterase tropF from Talaromyces stipitatus (strain ATCC 10500 / CBS 375.48 / QM 6759 / NRRL 1006) (Penicillium stipitatum).